The following is a 269-amino-acid chain: Carbohydrate metabolism regulator TYE7 (269 aa).

The disordered stretch occupies residues 146 to 178 (QPKIKQEPGTKAATKPKRRAPRKKLTESQKKAH). The span at 159–168 (TKPKRRAPRK) shows a compositional bias: basic residues. The segment covering 169 to 178 (KLTESQKKAH) has biased composition (basic and acidic residues). The region spanning 173–244 (SQKKAHNKIE…EKATEYILHL (72 aa)) is the bHLH domain.

As to quaternary structure, efficient DNA binding requires dimerization with another bHLH protein.

It localises to the nucleus. Its function is as follows. Key transcriptional regulator of carbohydrate metabolism. Binds the promoter sequences of the glycolytic genes at the CANNTG motif and activates their expression during growth on either fermentable or non-fermentable carbon sources as well as under hypoxic growth conditions. Complete glycolytic activation by GAL4 and TYE7 is required for full virulence. Involved in biofilm formation and negatively regulates hyphal formation under hypoxia. Also controls the expression of the copper transport protein CTR1. This Candida albicans (strain SC5314 / ATCC MYA-2876) (Yeast) protein is Carbohydrate metabolism regulator TYE7 (TYE7).